Here is a 219-residue protein sequence, read N- to C-terminus: Cysteine dioxygenase (219 aa).

Positions 106, 108, and 166 each coordinate Fe cation. Residues 113–183 (CVMKILHGSL…NDFAISLHLY (71 aa)) constitute a cross-link (3'-(S-cysteinyl)-tyrosine (Cys-Tyr)).

It belongs to the cysteine dioxygenase family. It depends on Fe cation as a cofactor. Post-translationally, the thioether cross-link between Cys-113 and Tyr-183 plays a structural role through stabilizing the Fe(2+) ion, and prevents the production of highly damaging free hydroxyl radicals by holding the oxygen radical via hydroxyl hydrogen.

It catalyses the reaction L-cysteine + O2 = 3-sulfino-L-alanine + H(+). Functionally, cysteine dioxygenase involved in sulfite formation from cysteine. Required for keratin degradation and plays an important role in filamentous growth and virulence. The sequence is that of Cysteine dioxygenase from Arthroderma benhamiae (Trichophyton mentagrophytes).